The chain runs to 212 residues: uncharacterized protein (212 aa).

Catalysis depends on Cys52, which acts as the Acyl-thioester intermediate. Catalysis depends on residues His89 and Asp104.

It belongs to the arylamine N-acetyltransferase family.

This is an uncharacterized protein from Acanthamoeba polyphaga (Amoeba).